Reading from the N-terminus, the 103-residue chain is Integration host factor subunit alpha (103 aa).

Residues 55-74 form a disordered region; it reads CREKPQRPGRNPKTGEEMPI.

The protein belongs to the bacterial histone-like protein family. As to quaternary structure, heterodimer of an alpha and a beta chain.

Its function is as follows. This protein is one of the two subunits of integration host factor, a specific DNA-binding protein that functions in genetic recombination as well as in transcriptional and translational control. In Thiobacillus denitrificans (strain ATCC 25259 / T1), this protein is Integration host factor subunit alpha.